The chain runs to 843 residues: Protein P (843 aa).

The segment at 1 to 177 (MPLSYQHFRR…FCGSPYSWEQ (177 aa)) is terminal protein domain (TP). The tract at residues 178-346 (ELQHGSTSLN…YCLSHIINLL (169 aa)) is spacer. Disordered regions lie at residues 180-202 (QHGSTSLNGEKGHGTEPFCAQSS) and 226-315 (QHKQ…VGSE). Residues 239-249 (RSGRLRSRVHT) show a composition bias toward basic residues. Composition is skewed to polar residues over residues 262–277 (TGHSDNLATRSTSCFH) and 287–299 (PSLSTSKGHTSTG). A polymerase/reverse transcriptase domain (RT) region spans residues 347–690 (EDWGPCYEHG…YMNLYPVARQ (344 aa)). The Reverse transcriptase domain maps to 357-600 (EHHIRTPKTP…YSLHFMGYII (244 aa)). Mg(2+)-binding residues include aspartate 429, aspartate 551, and aspartate 552.

Belongs to the hepadnaviridae P protein family.

It catalyses the reaction DNA(n) + a 2'-deoxyribonucleoside 5'-triphosphate = DNA(n+1) + diphosphate. The enzyme catalyses Endonucleolytic cleavage to 5'-phosphomonoester.. Activated by host HSP70 and HSP40 in vitro to be able to bind the epsilon loop of the pgRNA. Because deletion of the RNase H region renders the protein partly chaperone-independent, the chaperones may be needed indirectly to relieve occlusion of the RNA-binding site by this domain. Inhibited by several reverse-transcriptase inhibitors: Lamivudine, Adefovir and Entecavir. In terms of biological role, multifunctional enzyme that converts the viral RNA genome into dsDNA in viral cytoplasmic capsids. This enzyme displays a DNA polymerase activity that can copy either DNA or RNA templates, and a ribonuclease H (RNase H) activity that cleaves the RNA strand of RNA-DNA heteroduplexes in a partially processive 3'- to 5'-endonucleasic mode. Neo-synthesized pregenomic RNA (pgRNA) are encapsidated together with the P protein, and reverse-transcribed inside the nucleocapsid. Initiation of reverse-transcription occurs first by binding the epsilon loop on the pgRNA genome, and is initiated by protein priming, thereby the 5'-end of (-)DNA is covalently linked to P protein. Partial (+)DNA is synthesized from the (-)DNA template and generates the relaxed circular DNA (RC-DNA) genome. After budding and infection, the RC-DNA migrates in the nucleus, and is converted into a plasmid-like covalently closed circular DNA (cccDNA). The activity of P protein does not seem to be necessary for cccDNA generation, and is presumably released from (+)DNA by host nuclear DNA repair machinery. This Hepatitis B virus genotype H (isolate United States/LAS2523/2002) (HBV-H) protein is Protein P.